We begin with the raw amino-acid sequence, 212 residues long: MFITFEGGEGCGKTTQLTLLGDWLEKRCHRVVRTREPGGTALGRSLRGLLLDARSEITPTAELLLYATDRAEHLARVVRPALASGAAVLCDRFSDSTVAYQGYGRGLDLGLIERLNAIATGGLLPDLTFWLKLDPQAGLVRRLASNGNTPDRIEAETLAFHQRVHMGFAALANRYPGRIRPVDAGLSVEATAEQIRSAVDVFLNENQSKLEK.

7–14 (GGEGCGKT) provides a ligand contact to ATP.

This sequence belongs to the thymidylate kinase family.

The catalysed reaction is dTMP + ATP = dTDP + ADP. Functionally, phosphorylation of dTMP to form dTDP in both de novo and salvage pathways of dTTP synthesis. The chain is Thymidylate kinase from Gloeobacter violaceus (strain ATCC 29082 / PCC 7421).